Reading from the N-terminus, the 840-residue chain is Phosphatidylglycerol lysyltransferase (840 aa).

Residues 1–8 (MNQEVKNK) lie on the Cytoplasmic side of the membrane. A helical membrane pass occupies residues 9–29 (IFSILKITFATALFIFVAITL). The Extracellular segment spans residues 30–52 (YRELSGINFKDTLVEFSKINRMS). Residues 53-73 (LVLLFIGGGASLVILSMYDVI) traverse the membrane as a helical segment. Residues 74–89 (LSRALKMDISLGKVLR) lie on the Cytoplasmic side of the membrane. Residues 90 to 110 (VSYIINALNAIVGFGGFIGAG) form a helical membrane-spanning segment. Over 111-128 (VRAMVYKNYTHDKKKLVH) the chain is Extracellular. Residues 129–149 (FISLILISMLTGLSLLSLLIV) traverse the membrane as a helical segment. Topologically, residues 150–161 (FHVFDASLILDK) are cytoplasmic. The helical transmembrane segment at 162-182 (ITWVRWVLYVVSFFLPLFIIY) threads the bilayer. Residues 183 to 200 (SMVRPPDKNNRFVGLYCT) lie on the Extracellular side of the membrane. Residues 201–221 (LVSCVEWLAAAVVLYFCGVIV) traverse the membrane as a helical segment. At 222-229 (DAHVSFMS) the chain is on the cytoplasmic side. The helical transmembrane segment at 230-250 (FIAIFIIAALSGLVSFIPGGF) threads the bilayer. The Extracellular segment spans residues 251 to 271 (GAFDLVVLLGFKTLGVPEEKV). The chain crosses the membrane as a helical span at residues 272–292 (LLMLLLYRFAYYFVPVIIALI). At 293–337 (LSSFEFGTSAKKYIEGSKYFIPAKDVTSFLMSYQKDIIAKIPSLS) the chain is on the cytoplasmic side. Residues 338–358 (LAILVFFTSMIFFVNNLTIVY) form a helical membrane-spanning segment. Residues 359–369 (DALYDGNHLTY) are Extracellular-facing. Residues 370 to 390 (YILLAIHTSACLLLLLNVVGI) traverse the membrane as a helical segment. Topologically, residues 391 to 394 (YKQS) are cytoplasmic. 2 helical membrane passes run 395-415 (RRAI…TFFT) and 416-436 (YASY…IVAF). Residues 437-450 (RRARRLKRPVRMRN) lie on the Cytoplasmic side of the membrane. A helical transmembrane segment spans residues 451-471 (IVAMLLFSLFILYVNHIFIAG). Over 472–489 (TLYALDIYTIEMHTSVLR) the chain is Extracellular. Residues 490-510 (YYFWLTILIIAIIIGMIAWLF) form a helical membrane-spanning segment. Over 511–840 (DYQFSKVRIS…SKVMRVIRHK (330 aa)) the chain is Cytoplasmic.

The protein belongs to the LPG synthase family.

Its subcellular location is the cell membrane. The catalysed reaction is L-lysyl-tRNA(Lys) + a 1,2-diacyl-sn-glycero-3-phospho-(1'-sn-glycerol) = a 1,2-diacyl-sn-glycero-3-phospho-1'-(3'-O-L-lysyl)-sn-glycerol + tRNA(Lys). Catalyzes the transfer of a lysyl group from L-lysyl-tRNA(Lys) to membrane-bound phosphatidylglycerol (PG), which produces lysylphosphatidylglycerol (LPG), a major component of the bacterial membrane with a positive net charge. LPG synthesis contributes to bacterial virulence as it is involved in the resistance mechanism against cationic antimicrobial peptides (CAMP) produces by the host's immune system (defensins, cathelicidins) and by the competing microorganisms (bacteriocins). In fact, the modification of anionic phosphatidylglycerol with positively charged L-lysine results in repulsion of the peptides. The polypeptide is Phosphatidylglycerol lysyltransferase (mprF) (Staphylococcus aureus (strain COL)).